The sequence spans 404 residues: 5-aminolevulinate synthase (404 aa).

Positions 21 and 136 each coordinate substrate. The pyridoxal 5'-phosphate site is built by serine 188, histidine 216, and threonine 244. Lysine 247 is an active-site residue. Lysine 247 is modified (N6-(pyridoxal phosphate)lysine). Positions 276 and 277 each coordinate pyridoxal 5'-phosphate. Residue threonine 362 coordinates substrate.

The protein belongs to the class-II pyridoxal-phosphate-dependent aminotransferase family. In terms of assembly, homodimer. The cofactor is pyridoxal 5'-phosphate.

The catalysed reaction is succinyl-CoA + glycine + H(+) = 5-aminolevulinate + CO2 + CoA. It participates in porphyrin-containing compound metabolism; protoporphyrin-IX biosynthesis; 5-aminolevulinate from glycine: step 1/1. The sequence is that of 5-aminolevulinate synthase (hemA) from Rhizobium meliloti (strain 1021) (Ensifer meliloti).